Reading from the N-terminus, the 323-residue chain is Ribokinase (323 aa).

Substrate-binding positions include 26 to 28 (MTD), 54 to 58 (GKGAN), and Glu-155. Residues Asn-200, 236–241 (TLGASG), and Thr-257 each bind ATP. Asp-264 and Thr-266 together coordinate K(+). Residues 269–270 (GD) and Asn-296 contribute to the ATP site. Asp-270 lines the substrate pocket. Asp-270 functions as the Proton acceptor in the catalytic mechanism. K(+) is bound by residues Ser-302, Ala-305, Gly-307, and Ser-311.

It belongs to the carbohydrate kinase PfkB family. Ribokinase subfamily. In terms of assembly, homodimer. The cofactor is Mg(2+).

It localises to the cytoplasm. The protein localises to the nucleus. The enzyme catalyses D-ribose + ATP = D-ribose 5-phosphate + ADP + H(+). It functions in the pathway carbohydrate metabolism; D-ribose degradation; D-ribose 5-phosphate from beta-D-ribopyranose: step 2/2. Activated by a monovalent cation that binds near, but not in, the active site. The most likely occupant of the site in vivo is potassium. Ion binding induces a conformational change that may alter substrate affinity. Competitively inhibited by phosphonoacetic acid, etidronate, 2-carboxethylphosphonic acid, N-(phosphonomethyl)glycine, N-(phosphonomethyl)iminodiacetic acid and clodronate. Catalyzes the phosphorylation of ribose at O-5 in a reaction requiring ATP and magnesium. The resulting D-ribose-5-phosphate can then be used either for sythesis of nucleotides, histidine, and tryptophan, or as a component of the pentose phosphate pathway. This Mus musculus (Mouse) protein is Ribokinase.